A 275-amino-acid polypeptide reads, in one-letter code: Interleukin-2 receptor subunit alpha (275 aa).

An N-terminal signal peptide occupies residues 1–21 (MEPSLLMWRFFVFIVVPGCVT). Positions 22–81 (EACHDDPPSLRNAMFKVFRYEVGTMINCDCKTGFRRVSAVMRCVGDSSHSAWENRCFCNS) constitute a Sushi 1 domain. At 22–243 (EACHDDPPSL…DTFIFTTEYQ (222 aa)) the chain is on the extracellular side. Cystine bridges form between cysteine 24/cysteine 64, cysteine 49/cysteine 77, and cysteine 51/cysteine 79. A glycan (N-linked (GlcNAc...) asparagine) is linked at asparagine 80. The disordered stretch occupies residues 88–130 (QVKQVTPAPEEHREKKHTDAQNQTQPPEEADLPGHCEEPPPWE). Positions 96-106 (PEEHREKKHTD) are enriched in basic and acidic residues. Residue asparagine 109 is glycosylated (N-linked (GlcNAc...) asparagine). The span at 119-130 (LPGHCEEPPPWE) shows a compositional bias: basic and acidic residues. Residues 121 to 186 (GHCEEPPPWE…WTRPRLKCIR (66 aa)) form the Sushi 2 domain. Intrachain disulfides connect cysteine 123–cysteine 168 and cysteine 152–cysteine 184. The segment at 188–221 (GEHGQASDDAEPQESTEAPPGSGTFLPTRMAGTT) is disordered. A helical transmembrane segment spans residues 244 to 262 (IAVAGCTLLLASILLLSCL). The Cytoplasmic segment spans residues 263–275 (TWQRKWKKNRRTI).

In terms of assembly, non-covalent dimer of an alpha and a beta subunit. IL2R exists in 3 different forms: a high affinity dimer, an intermediate affinity monomer (beta subunit), and a low affinity monomer (alpha subunit). The high and intermediate affinity forms also associate with a gamma subunit.

Its subcellular location is the membrane. In terms of biological role, receptor for interleukin-2. The receptor is involved in the regulation of immune tolerance by controlling regulatory T cells (TREGs) activity. TREGs suppress the activation and expansion of autoreactive T-cells. The polypeptide is Interleukin-2 receptor subunit alpha (IL2RA) (Bos taurus (Bovine)).